Here is a 427-residue protein sequence, read N- to C-terminus: Cyclic 2,3-diphosphoglycerate synthetase (427 aa).

It belongs to the cyclic 2,3-diphosphoglycerate synthetase family.

The protein localises to the cytoplasm. It carries out the reaction (2R)-2,3-bisphosphoglycerate + ATP + H(+) = cyclic (2R)-2,3-bisphosphoglycerate + ADP + phosphate. Its function is as follows. Catalyzes the formation of cyclic 2,3-diphosphoglycerate (cDPG) by formation of an intramolecular phosphoanhydride bond at the expense of ATP. This chain is Cyclic 2,3-diphosphoglycerate synthetase, found in Pyrococcus abyssi (strain GE5 / Orsay).